Consider the following 333-residue polypeptide: ADP-L-glycero-D-manno-heptose-6-epimerase (333 aa).

Residues 11 to 12, 32 to 33, lysine 39, lysine 54, 76 to 80, and asparagine 93 each bind NADP(+); these read FI, DN, and QGACS. The active-site Proton acceptor is the tyrosine 140. Residue lysine 144 participates in NADP(+) binding. Asparagine 170 provides a ligand contact to substrate. 2 residues coordinate NADP(+): valine 171 and lysine 179. Catalysis depends on lysine 179, which acts as the Proton acceptor. Substrate contacts are provided by residues arginine 181, histidine 188, 202–205, arginine 215, and tyrosine 294; that span reads FGGW.

The protein belongs to the NAD(P)-dependent epimerase/dehydratase family. HldD subfamily. Homopentamer. The cofactor is NADP(+).

It catalyses the reaction ADP-D-glycero-beta-D-manno-heptose = ADP-L-glycero-beta-D-manno-heptose. Its pathway is nucleotide-sugar biosynthesis; ADP-L-glycero-beta-D-manno-heptose biosynthesis; ADP-L-glycero-beta-D-manno-heptose from D-glycero-beta-D-manno-heptose 7-phosphate: step 4/4. It functions in the pathway bacterial outer membrane biogenesis; LPS core biosynthesis. Functionally, catalyzes the interconversion between ADP-D-glycero-beta-D-manno-heptose and ADP-L-glycero-beta-D-manno-heptose via an epimerization at carbon 6 of the heptose. In Chromobacterium violaceum (strain ATCC 12472 / DSM 30191 / JCM 1249 / CCUG 213 / NBRC 12614 / NCIMB 9131 / NCTC 9757 / MK), this protein is ADP-L-glycero-D-manno-heptose-6-epimerase.